A 68-amino-acid chain; its full sequence is DNA-directed RNA polymerase subunit omega (68 aa).

This sequence belongs to the RNA polymerase subunit omega family. As to quaternary structure, the RNAP catalytic core consists of 2 alpha, 1 beta, 1 beta' and 1 omega subunit. When a sigma factor is associated with the core the holoenzyme is formed, which can initiate transcription.

The enzyme catalyses RNA(n) + a ribonucleoside 5'-triphosphate = RNA(n+1) + diphosphate. In terms of biological role, promotes RNA polymerase assembly. Latches the N- and C-terminal regions of the beta' subunit thereby facilitating its interaction with the beta and alpha subunits. The chain is DNA-directed RNA polymerase subunit omega from Trichlorobacter lovleyi (strain ATCC BAA-1151 / DSM 17278 / SZ) (Geobacter lovleyi).